A 162-amino-acid polypeptide reads, in one-letter code: Putative 4-hydroxy-4-methyl-2-oxoglutarate aldolase (162 aa).

Residues 75 to 78 (GDML) and arginine 97 each bind substrate. Aspartate 98 contacts a divalent metal cation.

Belongs to the class II aldolase/RraA-like family. In terms of assembly, homotrimer. A divalent metal cation is required as a cofactor.

It carries out the reaction 4-hydroxy-4-methyl-2-oxoglutarate = 2 pyruvate. The enzyme catalyses oxaloacetate + H(+) = pyruvate + CO2. Its function is as follows. Catalyzes the aldol cleavage of 4-hydroxy-4-methyl-2-oxoglutarate (HMG) into 2 molecules of pyruvate. Also contains a secondary oxaloacetate (OAA) decarboxylase activity due to the common pyruvate enolate transition state formed following C-C bond cleavage in the retro-aldol and decarboxylation reactions. This chain is Putative 4-hydroxy-4-methyl-2-oxoglutarate aldolase, found in Stutzerimonas stutzeri (strain A1501) (Pseudomonas stutzeri).